We begin with the raw amino-acid sequence, 346 residues long: Extracellular protease (346 aa).

The signal sequence occupies residues 1–21 (MMKATPIALLLAGVLASPLCA). Zn(2+) is bound at residue histidine 296. The active site involves glutamate 297. The Zn(2+) site is built by histidine 300 and aspartate 309.

Belongs to the peptidase M35 family. Zn(2+) is required as a cofactor.

Its function is as follows. Heat-labile protease. This is Extracellular protease from Aeromonas hydrophila.